We begin with the raw amino-acid sequence, 159 residues long: Protein-export protein SecB (159 aa).

Belongs to the SecB family. As to quaternary structure, homotetramer, a dimer of dimers. One homotetramer interacts with 1 SecA dimer.

It is found in the cytoplasm. Functionally, one of the proteins required for the normal export of preproteins out of the cell cytoplasm. It is a molecular chaperone that binds to a subset of precursor proteins, maintaining them in a translocation-competent state. It also specifically binds to its receptor SecA. The protein is Protein-export protein SecB of Nitrosospira multiformis (strain ATCC 25196 / NCIMB 11849 / C 71).